The sequence spans 217 residues: NADPH-dependent 3-demethoxyubiquinone 3-hydroxylase, mitochondrial (217 aa).

The N-terminal 23 residues, 1–23 (MSAAGAIAAASVGRLRTGVRRPF), are a transit peptide targeting the mitochondrion. Tandem repeats lie at residues 48-129 (AVDR…TALL) and 130-217 (GKEG…SERF). A 2 X approximate tandem repeats region spans residues 48 to 217 (AVDRIIRVDH…SAAIYLSERF (170 aa)). Arginine 51 lines the NADH pocket. Glutamate 60, glutamate 90, histidine 93, glutamate 142, glutamate 178, and histidine 181 together coordinate Fe cation. 2 residues coordinate NADH: tyrosine 212 and arginine 216.

This sequence belongs to the COQ7 family. As to quaternary structure, component of a multi-subunit COQ enzyme complex. Interacts with COQ8B and COQ6. Interacts with COQ9. Fe cation is required as a cofactor. In terms of tissue distribution, highly expressed in tissues with high energy demand such as heart, muscle, liver, and kidney.

The protein localises to the mitochondrion inner membrane. The enzyme catalyses a 5-methoxy-2-methyl-3-(all-trans-polyprenyl)benzoquinone + NADH + O2 = a 3-demethylubiquinone + NAD(+) + H2O. The protein operates within cofactor biosynthesis; ubiquinone biosynthesis. Functionally, catalyzes the hydroxylation of the 5-methoxy-2-methyl-3-(all-trans-polyprenyl)benzoquinone at the C6 position and participates in the biosynthesis of ubiquinone. Catalyzes the reaction through a substrate-mediated reduction pathway, whereby NADH shuttles electrons to 5-methoxy-2-methyl-3-(all-trans-decaprenyl)benzoquinone, which then transfers the electrons to the two Fe(3+) centers. The binding of 5-methoxy-2-methyl-3-(all-trans-polyprenyl)benzoquinone (DMQn) mediates reduction of the diiron center by nicotinamide adenine dinucleotide (NADH) and initiates oxygen activation for subsequent DMQ hydroxylation. The physiological substrates are 5-methoxy-2-methyl-3-(all-trans-nonaprenyl)benzoquinone (DMQ(9)) and 5-methoxy-2-methyl-3-(all-trans-decaprenyl)benzoquinone (DMQ(10)), however in vitro the enzyme does not have any specificity concerning the length of the polyprenyl tail, and accepts tails of various lengths with similar efficiency. Also has a structural role in the COQ enzyme complex, stabilizing other COQ polypeptides. Involved in lifespan determination in a ubiquinone-independent manner. Plays a role in modulating mitochondrial stress responses, acting in the nucleus, perhaps via regulating gene expression, independent of its characterized mitochondrial function in ubiquinone biosynthesis. The sequence is that of NADPH-dependent 3-demethoxyubiquinone 3-hydroxylase, mitochondrial from Mus musculus (Mouse).